We begin with the raw amino-acid sequence, 267 residues long: Diphthine--ammonia ligase (267 aa).

Tyrosine 97 is modified (phosphotyrosine).

This sequence belongs to the Diphthine--ammonia ligase family.

The catalysed reaction is diphthine-[translation elongation factor 2] + NH4(+) + ATP = diphthamide-[translation elongation factor 2] + AMP + diphosphate + H(+). It participates in protein modification; peptidyl-diphthamide biosynthesis. Functionally, amidase that catalyzes the last step of diphthamide biosynthesis using ammonium and ATP. Diphthamide biosynthesis consists in the conversion of an L-histidine residue in the translation elongation factor eEF-2 (EEF2) to diphthamide. The sequence is that of Diphthine--ammonia ligase (Dph6) from Rattus norvegicus (Rat).